A 548-amino-acid chain; its full sequence is Probable manganese-dependent inorganic pyrophosphatase (548 aa).

The tract at residues 1–74 (MKALERVYVI…HIETLEPTVE (74 aa)) is PPase part 1. 3 residues coordinate Mn(2+): H12, D16, and D18. CBS domains are found at residues 77–132 (ELKN…RLKI) and 254–311 (MSKK…VILV). A PPase part 2 region spans residues 306-548 (KKVILVDHNE…KIGEVLRRER (243 aa)). Residues D312, H334, and D386 each coordinate Mn(2+).

This sequence belongs to the PPase class C family. It depends on Mn(2+) as a cofactor.

The protein localises to the cytoplasm. It catalyses the reaction diphosphate + H2O = 2 phosphate + H(+). The sequence is that of Probable manganese-dependent inorganic pyrophosphatase (ppaC) from Thermotoga maritima (strain ATCC 43589 / DSM 3109 / JCM 10099 / NBRC 100826 / MSB8).